Reading from the N-terminus, the 313-residue chain is Pyrimidine-specific ribonucleoside hydrolase RihB (313 aa).

The active-site Proton acceptor is D11. The Ca(2+) site is built by D11, D16, and V124. Residues Q227 and H239 each coordinate substrate. A Ca(2+)-binding site is contributed by D240.

Belongs to the IUNH family. RihB subfamily. As to quaternary structure, homotetramer. The cofactor is Ca(2+).

The catalysed reaction is a pyrimidine ribonucleoside + H2O = a pyrimidine nucleobase + D-ribose. Hydrolyzes cytidine or uridine to ribose and cytosine or uracil, respectively. Has a clear preference for cytidine over uridine. Strictly specific for ribonucleosides. The polypeptide is Pyrimidine-specific ribonucleoside hydrolase RihB (Escherichia coli (strain K12 / DH10B)).